The sequence spans 225 residues: Thymidylate kinase (225 aa).

10–17 (GVEGGGKT) is a binding site for ATP.

The protein belongs to the thymidylate kinase family.

It carries out the reaction dTMP + ATP = dTDP + ADP. Phosphorylation of dTMP to form dTDP in both de novo and salvage pathways of dTTP synthesis. The chain is Thymidylate kinase from Trichodesmium erythraeum (strain IMS101).